The chain runs to 463 residues: L-seryl-tRNA(Sec) selenium transferase (463 aa).

Lysine 295 is modified (N6-(pyridoxal phosphate)lysine).

This sequence belongs to the SelA family. In terms of assembly, homodecamer; pentamer of dimers. Binds only one seryl-tRNA(Sec) per dimer. Pyridoxal 5'-phosphate is required as a cofactor.

The protein resides in the cytoplasm. It carries out the reaction L-seryl-tRNA(Sec) + selenophosphate + H(+) = L-selenocysteinyl-tRNA(Sec) + phosphate. It functions in the pathway aminoacyl-tRNA biosynthesis; selenocysteinyl-tRNA(Sec) biosynthesis; selenocysteinyl-tRNA(Sec) from L-seryl-tRNA(Sec) (bacterial route): step 1/1. Its function is as follows. Converts seryl-tRNA(Sec) to selenocysteinyl-tRNA(Sec) required for selenoprotein biosynthesis. This Escherichia coli (strain K12 / MC4100 / BW2952) protein is L-seryl-tRNA(Sec) selenium transferase.